Consider the following 571-residue polypeptide: Urease subunit alpha (571 aa).

One can recognise a Urease domain in the interval 133–571 (GGIDTHVHFI…LPLTQRYFLF (439 aa)). Ni(2+)-binding residues include His138, His140, and Lys221. Lys221 carries the post-translational modification N6-carboxylysine. His223 provides a ligand contact to substrate. Ni(2+) is bound by residues His250 and His276. His324 (proton donor) is an active-site residue. Asp364 serves as a coordination point for Ni(2+).

Belongs to the metallo-dependent hydrolases superfamily. Urease alpha subunit family. As to quaternary structure, heterotrimer of UreA (gamma), UreB (beta) and UreC (alpha) subunits. Three heterotrimers associate to form the active enzyme. Ni cation serves as cofactor. Post-translationally, carboxylation allows a single lysine to coordinate two nickel ions.

The protein localises to the cytoplasm. It carries out the reaction urea + 2 H2O + H(+) = hydrogencarbonate + 2 NH4(+). It participates in nitrogen metabolism; urea degradation; CO(2) and NH(3) from urea (urease route): step 1/1. The protein is Urease subunit alpha of Staphylococcus aureus (strain MRSA252).